Here is a 75-residue protein sequence, read N- to C-terminus: Large ribosomal subunit protein bL31 (75 aa).

4 residues coordinate Zn(2+): C16, C18, C36, and C39.

It belongs to the bacterial ribosomal protein bL31 family. Type A subfamily. Part of the 50S ribosomal subunit. Requires Zn(2+) as cofactor.

Its function is as follows. Binds the 23S rRNA. In Desulforapulum autotrophicum (strain ATCC 43914 / DSM 3382 / VKM B-1955 / HRM2) (Desulfobacterium autotrophicum), this protein is Large ribosomal subunit protein bL31.